A 302-amino-acid chain; its full sequence is Proline dehydrogenase 1 (302 aa).

K95 contacts substrate. Residue D129 is part of the active site. Positions 130 and 158 each coordinate FAD. The active site involves R179. FAD contacts are provided by residues 182 to 184 and 221 to 222; these read KGA and TH. 283 to 284 serves as a coordination point for substrate; it reads RR.

It belongs to the proline dehydrogenase family. FAD is required as a cofactor.

It catalyses the reaction L-proline + a quinone = (S)-1-pyrroline-5-carboxylate + a quinol + H(+). It participates in amino-acid degradation; L-proline degradation into L-glutamate; L-glutamate from L-proline: step 1/2. In terms of biological role, converts proline to delta-1-pyrroline-5-carboxylate. The protein is Proline dehydrogenase 1 (fadM) of Bacillus subtilis (strain 168).